The chain runs to 1043 residues: Protein SLOW WALKER 2 (1043 aa).

4 disordered regions span residues 32–113 (SALP…SIDD), 444–469 (QGAD…VSTD), 632–737 (DIEH…GGYD), and 861–1043 (SKKK…KASE). The Nuclear localization signal 1 motif lies at 44 to 51 (FRKPAKSK). Basic residues predominate over residues 47–59 (PAKSKTQKRKKPK). 2 stretches are compositionally biased toward basic and acidic residues: residues 80 to 95 (EKGK…KDAP) and 444 to 466 (QGAD…KQEV). A Nuclear localization signal 2 motif is present at residues 441 to 448 (NRKQGADD). The span at 632-645 (DIEHFEDVIEGDDV) shows a compositional bias: acidic residues. Over residues 646–673 (DPNKKAENDENVVEVDHDGVEKSSRDGD) the composition is skewed to basic and acidic residues. Acidic residues-rich tracts occupy residues 688–699 (DEEDDNASDDSE) and 872–983 (EEAA…DSDG). Over residues 988–1000 (SKKKKKEKRKRKS) the composition is skewed to basic residues. Residues 1006–1031 (EEYKHLIDQDEKEDSKTKRKATSEPT) show a composition bias toward basic and acidic residues. The Nuclear localization signal 3 motif lies at 1022-1029 (TKRKATSE). Basic residues predominate over residues 1032-1043 (KKKKKKKSKASE).

It belongs to the CBF/MAK21 family. Interacts with RBL in both the nucleolus and nucleoplasm. Binds to NOC2. In terms of tissue distribution, mainly expressed in actively dividing tissues (e.g. root tips, lateral root primordia, shoot apices, young leaves, inflorescences and pollen grains) through the plant, including roots, stems, leaves, inflorescences, siliques and seedlings, and in gametophytes.

The protein localises to the nucleus. Its subcellular location is the nucleolus. Functionally, together with NOC2, probably involved in pre-ribosome export from the nucleus to the cytoplasm. Required for coordinated cell cycle progression during female gametophyte and pollen development. The polypeptide is Protein SLOW WALKER 2 (Arabidopsis thaliana (Mouse-ear cress)).